Here is a 383-residue protein sequence, read N- to C-terminus: Cytochrome b (383 aa).

4 consecutive transmembrane segments (helical) span residues 32-52 (VGSL…FLAM), 76-98 (WLMR…LHMG), 113-133 (VWSM…MGYC), and 179-199 (FFAL…MHFM). Heme b is bound by residues histidine 82 and histidine 96. Heme b is bound by residues histidine 183 and histidine 197. Histidine 202 lines the a ubiquinone pocket. 4 helical membrane-spanning segments follow: residues 225–245 (FVFK…LFVF), 289–309 (LGGV…PMTD), 321–341 (LSKL…NMGQ), and 348–368 (FIEL…MLVP).

It belongs to the cytochrome b family. In terms of assembly, fungal cytochrome b-c1 complex contains 10 subunits; 3 respiratory subunits, 2 core proteins and 5 low-molecular weight proteins. Cytochrome b-c1 complex is a homodimer. Heme b serves as cofactor.

Its subcellular location is the mitochondrion inner membrane. Its function is as follows. Component of the ubiquinol-cytochrome c reductase complex (complex III or cytochrome b-c1 complex) that is part of the mitochondrial respiratory chain. The b-c1 complex mediates electron transfer from ubiquinol to cytochrome c. Contributes to the generation of a proton gradient across the mitochondrial membrane that is then used for ATP synthesis. This is Cytochrome b (COB) from Debaryomyces hansenii (strain ATCC 36239 / CBS 767 / BCRC 21394 / JCM 1990 / NBRC 0083 / IGC 2968) (Yeast).